The chain runs to 269 residues: Expansin-B11 (269 aa).

The first 30 residues, methionine 1–cysteine 30, serve as a signal peptide directing secretion. Asparagine 40 carries N-linked (GlcNAc...) asparagine glycosylation. The region spanning glycine 69–lysine 175 is the Expansin-like EG45 domain. 3 cysteine pairs are disulfide-bonded: cysteine 72–cysteine 100, cysteine 103–cysteine 170, and cysteine 108–cysteine 114. Positions asparagine 187–alanine 268 constitute an Expansin-like CBD domain.

Belongs to the expansin family. Expansin B subfamily. Expressed in pollen.

The protein localises to the secreted. Its subcellular location is the cell wall. It localises to the membrane. Functionally, may aid fertilization by loosening the cell wall of the stigma and style, thereby facilitating penetration of the pollen tube. Acts selectively on grass cell walls, which are relatively poor in pectins and xyloglucans and rich in glucuronoarabinoxylans and (1-3),(1-4)-beta-D-glucans, when compared with cell walls of other angiosperms, including other monocots. The sequence is that of Expansin-B11 (EXPB11) from Zea mays (Maize).